Consider the following 558-residue polypeptide: Laccase-10 (558 aa).

The N-terminal stretch at 1–22 (MVFPIRILVLFALLAFPACVHG) is a signal peptide. Plastocyanin-like domains lie at 30-146 (NVVT…PKLG) and 157-308 (EEVI…YSGT). The N-linked (GlcNAc...) asparagine glycan is linked to Asn-76. Positions 80 and 82 each coordinate Cu cation. N-linked (GlcNAc...) asparagine glycosylation occurs at Asn-112. Cu cation-binding residues include His-125 and His-127. N-linked (GlcNAc...) asparagine glycosylation is found at Asn-185, Asn-296, Asn-323, Asn-373, Asn-383, Asn-400, and Asn-441. The Plastocyanin-like 3 domain maps to 408 to 542 (DFPAKPRRVF…KMAFLVENGK (135 aa)). 7 residues coordinate Cu cation: His-459, His-462, His-464, His-521, Cys-522, His-523, and His-527. A glycan (N-linked (GlcNAc...) asparagine) is linked at Asn-545.

The protein belongs to the multicopper oxidase family. Cu cation serves as cofactor. In terms of tissue distribution, ubiquitous, with lower levels in siliques.

Its subcellular location is the secreted. It localises to the extracellular space. It is found in the apoplast. It catalyses the reaction 4 hydroquinone + O2 = 4 benzosemiquinone + 2 H2O. Lignin degradation and detoxification of lignin-derived products. The polypeptide is Laccase-10 (LAC10) (Arabidopsis thaliana (Mouse-ear cress)).